A 226-amino-acid chain; its full sequence is Late protein I226R (226 aa).

The signal sequence occupies residues 1–16 (MKMETFLVCLFHNADG). 2 N-linked (GlcNAc...) asparagine; by host glycosylation sites follow: N142 and N164.

Belongs to the asfivirus I226R family.

Functionally, plays a role in the inhibition of host NF-kappa-B and IRF3 signaling pathways. Mechanistically, promotes the degradation of host IKBKG through enhancing its ubiquitination leading to inhibition of both pathways. The protein is Late protein I226R of African swine fever virus (isolate Warthog/Namibia/Wart80/1980) (ASFV).